The chain runs to 332 residues: MNIRERKRKHLEACLEGEVAYQKTTTGLEGFRLRYQALAGLALGEVDLTTPFLGKTLKAPFLIGAMTGGEENGERINLALAEAAEALGVGMMLGSGRILLERPEALRSFRVRKVAPKALLIANLGLAQLRRYGRDDLLRLVEALEADALAFHVNPLQEAVQRGDTDFRGLVERLAELLPLPFPVMVKEVGHGLSREAALALRDLPLAAVDVAGAGGTSWARVEEWVRFGEVRHPELCEIGIPTARAILEVREVLPHLPLVASGGVYTGTDGAKALALGADLLAVARPLLRPALEGAERVAAWIGDYLEELRTALFAIGAKNPKEARGRVERV.

Residue 6–7 participates in substrate binding; the sequence is RK. FMN is bound by residues 65-67, Ser95, and Asn123; that span reads AMT. 95–97 lines the substrate pocket; sequence SGR. Substrate is bound at residue Gln157. Residue Glu158 coordinates Mg(2+). FMN-binding positions include Lys187, Thr217, 264–266, Ala285, and 285–286; these read GVY and AR.

This sequence belongs to the IPP isomerase type 2 family. Homooctamer. Dimer of tetramers. Requires FMN as cofactor. NADPH serves as cofactor. It depends on Mg(2+) as a cofactor.

The protein localises to the cytoplasm. The catalysed reaction is isopentenyl diphosphate = dimethylallyl diphosphate. Its activity is regulated as follows. Competitively inhibited by N,N-dimethyl-2-amino-1-ethyl diphosphate (NIPP) and isopentyl diphosphate. Functionally, involved in the biosynthesis of isoprenoids. Catalyzes the 1,3-allylic rearrangement of the homoallylic substrate isopentenyl (IPP) to its allylic isomer, dimethylallyl diphosphate (DMAPP). This is Isopentenyl-diphosphate delta-isomerase from Thermus thermophilus (strain ATCC BAA-163 / DSM 7039 / HB27).